The chain runs to 144 residues: uncharacterized protein (144 aa).

Transmembrane regions (helical) follow at residues Val27 to Ile47, Leu49 to Leu69, Ile83 to Val103, and Ala106 to Val126.

Its subcellular location is the membrane. This is an uncharacterized protein from Saccharomyces cerevisiae (strain ATCC 204508 / S288c) (Baker's yeast).